A 451-amino-acid polypeptide reads, in one-letter code: Probable D-serine dehydratase (451 aa).

N6-(pyridoxal phosphate)lysine is present on Lys119.

Belongs to the serine/threonine dehydratase family. DsdA subfamily. Pyridoxal 5'-phosphate is required as a cofactor.

It catalyses the reaction D-serine = pyruvate + NH4(+). In Acidovorax sp. (strain JS42), this protein is Probable D-serine dehydratase.